Here is a 439-residue protein sequence, read N- to C-terminus: DNA damage-inducible protein 1 (439 aa).

A Ubiquitin-like domain is found at 1–82; it reads MQITIAIQDT…LALHVRETQR (82 aa). The tract at residues 82–101 is disordered; sequence RATAVPESQQGRPAAPPQQD. The active site involves aspartate 220. Positions 333 to 398 are disordered; it reads QDEPTIEGPG…PAPRAPQARS (66 aa). Low complexity-rich tracts occupy residues 364 to 375 and 383 to 398; these read GQAGPSTAAQPG and PASA…QARS. Positions 398–438 constitute a UBA domain; that stretch reads SFPREHIEQLVALGADEQKAIRALEATDGNVEYAASLIFEG.

This sequence belongs to the DDI1 family. In terms of assembly, binds ubiquitin and polyubiquitinated proteins.

It localises to the cytoplasm. Its function is as follows. Probable aspartic protease. May be involved in the regulation of exocytosis. Acts as a linker between the 19S proteasome and polyubiquitinated proteins via UBA domain interactions with ubiquitin for their subsequent degradation. Required for S-phase checkpoint control. This Neurospora crassa (strain ATCC 24698 / 74-OR23-1A / CBS 708.71 / DSM 1257 / FGSC 987) protein is DNA damage-inducible protein 1 (ddi-1).